The sequence spans 823 residues: Leucine--tRNA ligase (823 aa).

Residues 42-52 (PYPSGTLHMGH) carry the 'HIGH' region motif. The 'KMSKS' region signature appears at 575–579 (KMSKS). K578 lines the ATP pocket.

It belongs to the class-I aminoacyl-tRNA synthetase family.

The protein localises to the cytoplasm. The catalysed reaction is tRNA(Leu) + L-leucine + ATP = L-leucyl-tRNA(Leu) + AMP + diphosphate. The sequence is that of Leucine--tRNA ligase from Legionella pneumophila (strain Lens).